The following is an 84-amino-acid chain: Large ribosomal subunit protein bL27 (84 aa).

Residues 1 to 22 are disordered; sequence MAHKKAGGSTRNGRDSESKRLG.

Belongs to the bacterial ribosomal protein bL27 family.

The polypeptide is Large ribosomal subunit protein bL27 (Shewanella woodyi (strain ATCC 51908 / MS32)).